The sequence spans 586 residues: Glutamate--tRNA ligase (586 aa).

Residues 84–111 (LTDIESEDTTDTYDLPSLPGVSDDEPTQ) form a disordered region. A compositionally biased stretch (acidic residues) spans 85–94 (TDIESEDTTD). A 'HIGH' region motif is present at residues 119 to 129 (PNPNGPWHIGH).

The protein belongs to the class-I aminoacyl-tRNA synthetase family. Glutamate--tRNA ligase type 2 subfamily.

The protein localises to the cytoplasm. The catalysed reaction is tRNA(Glu) + L-glutamate + ATP = L-glutamyl-tRNA(Glu) + AMP + diphosphate. In terms of biological role, catalyzes the attachment of glutamate to tRNA(Glu) in a two-step reaction: glutamate is first activated by ATP to form Glu-AMP and then transferred to the acceptor end of tRNA(Glu). The chain is Glutamate--tRNA ligase from Haloquadratum walsbyi (strain DSM 16790 / HBSQ001).